A 317-amino-acid chain; its full sequence is ATP synthase gamma chain (317 aa).

This sequence belongs to the ATPase gamma chain family. As to quaternary structure, F-type ATPases have 2 components, CF(1) - the catalytic core - and CF(0) - the membrane proton channel. CF(1) has five subunits: alpha(3), beta(3), gamma(1), delta(1), epsilon(1). CF(0) has three main subunits: a, b and c.

It is found in the cellular thylakoid membrane. In terms of biological role, produces ATP from ADP in the presence of a proton gradient across the membrane. The gamma chain is believed to be important in regulating ATPase activity and the flow of protons through the CF(0) complex. This chain is ATP synthase gamma chain, found in Acaryochloris marina (strain MBIC 11017).